Here is a 523-residue protein sequence, read N- to C-terminus: Sensory neuron membrane protein 1 (523 aa).

Topologically, residues 1–11 (MQLPRELKYAA) are cytoplasmic. The chain crosses the membrane as a helical span at residues 12–32 (IAGGVALFGLIFGWVLFPTIL). Residues 33-458 (KSQLKKEMAL…HQLFIPKRVV (426 aa)) lie on the Extracellular side of the membrane. N-linked (GlcNAc...) asparagine glycans are attached at residues Asn-67 and Asn-229. 3 disulfide bridges follow: Cys-268–Cys-333, Cys-297–Cys-352, and Cys-335–Cys-341. Residue Asn-440 is glycosylated (N-linked (GlcNAc...) asparagine). A helical transmembrane segment spans residues 459–479 (GVLRWWMVSFGSLGAVIGIVF). Over 480-523 (HFRDHIMRLAVSGDTKVSKVTPEEEEQKDISVIGQAQEPAKVNI) the chain is Cytoplasmic.

Belongs to the CD36 family.

The protein localises to the cell membrane. Its function is as follows. Plays an olfactory role that is not restricted to pheromone sensitivity. The protein is Sensory neuron membrane protein 1 of Helicoverpa armigera (Cotton bollworm).